The chain runs to 199 residues: MDSENCSITENSSSHLERGQKDHGTSIHFEKHHEGSIQVSIPWAVLIVVLITSLIIALIALNVGKYNCPGLYEKLESSDHHVATCKNEWISYKRTCYFFSTTTKSWALAQRSCSEDAATLAVIDSEKDMTFLKRYSGELEHWIGLKNEANQTWKWANGKEFNSWFNLTGSGRCVSVNHKNVTAVDCEANFHWVCSKPSR.

Residues M1–S14 are compositionally biased toward polar residues. Residues M1–Q20 are disordered. The Cytoplasmic segment spans residues M1–S40. The chain crosses the membrane as a helical; Signal-anchor for type II membrane protein span at residues I41–L61. The Extracellular portion of the chain corresponds to N62–R199. Cystine bridges form between C85/C96, C113/C194, and C173/C186. Residues Y92 to S195 form the C-type lectin domain. 3 N-linked (GlcNAc...) asparagine glycosylation sites follow: N150, N166, and N180.

As to quaternary structure, homodimer; disulfide-linked. Interacts with S100A8 and S100A9. Interacts with galactin-1/LGALS1. Interacts with S1PR1; this interaction mediates S1PR1 degradation. Interacts with JAK3 and STAT5. In terms of processing, constitutive Ser/Thr phosphorylation in both mature thymocytes and activated T-lymphocytes. As to expression, expressed on the surface of activated T-cells, B-cells, natural killer cells, neutrophils and platelets. Present also in eosinophils.

It is found in the cell membrane. Functionally, transmembrane protein expressed mainly on T-cells resident in mucosa that plays an essential role in immune cell homeostasis. Rapidly expressed on the surface of platelets, T-lymphocytes and NK cells upon activation by various stimuli, such as antigen recognition or cytokine signaling, stimulates different signaling pathways in different cell types. Negatively regulates Th17 cell differentiation through its carbohydrate dependent interaction with galectin-1/LGALS1 present on immature dendritic cells. Association of CD69 cytoplasmic tail with the JAK3/STAT5 signaling pathway regulates the transcription of RORgamma/RORC and, consequently, differentiation toward the Th17 lineage. Also acts via the S100A8/S100A9 complex present on peripheral blood mononuclear cells to promote the conversion of naive CD4 T-cells into regulatory T-cells. Acts as an oxidized low-density lipoprotein (oxLDL) receptor in CD4 T-lymphocytes and negatively regulates the inflammatory response by inducing the expression of PDCD1 through the activation of NFAT. Participates in adipose tissue-derived mesenchymal stem cells (ASCs)-mediated protection against P.aeruginosa infection. Mechanistically, specifically recognizes P.aeruginosa to promote ERK1 activation, followed by granulocyte-macrophage colony-stimulating factor (GM-CSF) and other inflammatory cytokines secretion. In eosinophils, induces IL-10 production through the ERK1/2 pathway. Negatively regulates the chemotactic responses of effector lymphocytes and dendritic cells (DCs) to sphingosine 1 phosphate/S1P by acting as a S1PR1 receptor agonist and facilitating the internalization and degradation of the receptor. This Mus musculus (Mouse) protein is Early activation antigen CD69 (Cd69).